A 279-amino-acid polypeptide reads, in one-letter code: 3-methyl-2-oxobutanoate hydroxymethyltransferase (279 aa).

Residues Asp-43 and Asp-82 each contribute to the Mg(2+) site. Residues 43-44, Asp-82, and Lys-112 contribute to the 3-methyl-2-oxobutanoate site; that span reads DS. A Mg(2+)-binding site is contributed by Glu-114. Glu-181 serves as the catalytic Proton acceptor.

The protein belongs to the PanB family. As to quaternary structure, homodecamer; pentamer of dimers. The cofactor is Mg(2+).

The protein resides in the cytoplasm. It catalyses the reaction 3-methyl-2-oxobutanoate + (6R)-5,10-methylene-5,6,7,8-tetrahydrofolate + H2O = 2-dehydropantoate + (6S)-5,6,7,8-tetrahydrofolate. It participates in cofactor biosynthesis; (R)-pantothenate biosynthesis; (R)-pantoate from 3-methyl-2-oxobutanoate: step 1/2. In terms of biological role, catalyzes the reversible reaction in which hydroxymethyl group from 5,10-methylenetetrahydrofolate is transferred onto alpha-ketoisovalerate to form ketopantoate. In Halalkalibacterium halodurans (strain ATCC BAA-125 / DSM 18197 / FERM 7344 / JCM 9153 / C-125) (Bacillus halodurans), this protein is 3-methyl-2-oxobutanoate hydroxymethyltransferase.